Consider the following 386-residue polypeptide: Protein DOM34 (386 aa).

This sequence belongs to the eukaryotic release factor 1 family. Pelota subfamily. Monomer. Component of the Dom34-Hbs1 complex, also named Pelota-HBS1L complex, composed of DOM34 and HBS1. A divalent metal cation is required as a cofactor.

The protein resides in the cytoplasm. Functionally, component of the Dom34-Hbs1 complex, a complex that recognizes stalled ribosomes and triggers the No-Go Decay (NGD) pathway. In the Dom34-Hbs1 complex, DOM34 recognizes ribosomes stalled at the 3' end of an mRNA and engages stalled ribosomes by destabilizing mRNA in the mRNA channel. Following ribosome-binding, the Dom34-Hbs1 complex promotes the disassembly of stalled ribosomes, followed by degradation of damaged mRNAs as part of the NGD pathway. The Dom34-Hbs1 complex is also involved in non-functional rRNA decay. This Saccharomyces cerevisiae (strain ATCC 204508 / S288c) (Baker's yeast) protein is Protein DOM34.